Here is a 297-residue protein sequence, read N- to C-terminus: Homoserine kinase (297 aa).

Position 82-92 (82-92 (PVSRGLGSSAA)) interacts with ATP.

Belongs to the GHMP kinase family. Homoserine kinase subfamily.

Its subcellular location is the cytoplasm. It catalyses the reaction L-homoserine + ATP = O-phospho-L-homoserine + ADP + H(+). The protein operates within amino-acid biosynthesis; L-threonine biosynthesis; L-threonine from L-aspartate: step 4/5. Catalyzes the ATP-dependent phosphorylation of L-homoserine to L-homoserine phosphate. In Clostridium botulinum (strain Langeland / NCTC 10281 / Type F), this protein is Homoserine kinase.